The primary structure comprises 437 residues: Phosphomethylpyrimidine synthase (437 aa).

Substrate-binding positions include N69, M98, Y127, H163, 185–187, 226–229, and E265; these read SRG and DACR. A Zn(2+)-binding site is contributed by H269. Y292 contributes to the substrate binding site. Zn(2+) is bound at residue H333. The [4Fe-4S] cluster site is built by C409, C412, and C416.

The protein belongs to the ThiC family. The cofactor is [4Fe-4S] cluster.

It carries out the reaction 5-amino-1-(5-phospho-beta-D-ribosyl)imidazole + S-adenosyl-L-methionine = 4-amino-2-methyl-5-(phosphooxymethyl)pyrimidine + CO + 5'-deoxyadenosine + formate + L-methionine + 3 H(+). It participates in cofactor biosynthesis; thiamine diphosphate biosynthesis. In terms of biological role, catalyzes the synthesis of the hydroxymethylpyrimidine phosphate (HMP-P) moiety of thiamine from aminoimidazole ribotide (AIR) in a radical S-adenosyl-L-methionine (SAM)-dependent reaction. This is Phosphomethylpyrimidine synthase from Clostridium botulinum (strain ATCC 19397 / Type A).